The primary structure comprises 121 residues: Large ribosomal subunit protein bL19 (121 aa).

This sequence belongs to the bacterial ribosomal protein bL19 family.

This protein is located at the 30S-50S ribosomal subunit interface and may play a role in the structure and function of the aminoacyl-tRNA binding site. The polypeptide is Large ribosomal subunit protein bL19 (Gloeobacter violaceus (strain ATCC 29082 / PCC 7421)).